The primary structure comprises 476 residues: Aspartyl/glutamyl-tRNA(Asn/Gln) amidotransferase subunit B (476 aa).

The protein belongs to the GatB/GatE family. GatB subfamily. In terms of assembly, heterotrimer of A, B and C subunits.

The catalysed reaction is L-glutamyl-tRNA(Gln) + L-glutamine + ATP + H2O = L-glutaminyl-tRNA(Gln) + L-glutamate + ADP + phosphate + H(+). The enzyme catalyses L-aspartyl-tRNA(Asn) + L-glutamine + ATP + H2O = L-asparaginyl-tRNA(Asn) + L-glutamate + ADP + phosphate + 2 H(+). Functionally, allows the formation of correctly charged Asn-tRNA(Asn) or Gln-tRNA(Gln) through the transamidation of misacylated Asp-tRNA(Asn) or Glu-tRNA(Gln) in organisms which lack either or both of asparaginyl-tRNA or glutaminyl-tRNA synthetases. The reaction takes place in the presence of glutamine and ATP through an activated phospho-Asp-tRNA(Asn) or phospho-Glu-tRNA(Gln). This chain is Aspartyl/glutamyl-tRNA(Asn/Gln) amidotransferase subunit B, found in Bacillus licheniformis (strain ATCC 14580 / DSM 13 / JCM 2505 / CCUG 7422 / NBRC 12200 / NCIMB 9375 / NCTC 10341 / NRRL NRS-1264 / Gibson 46).